The primary structure comprises 438 residues: uncharacterized protein (438 aa).

The signal sequence occupies residues Met1–Ser20. Cys21 carries N-palmitoyl cysteine lipidation. Cys21 is lipidated: S-diacylglycerol cysteine.

The protein localises to the cell membrane. This is an uncharacterized protein from Treponema pallidum (strain Nichols).